A 38-amino-acid polypeptide reads, in one-letter code: RapG inhibitor (38 aa).

The propeptide occupies 1-33 (MKRFLIGAGVAAVILSGWFIADHQTHSQEMKVA).

The protein belongs to the Phr family. Post-translationally, contains a predicted signal peptide cleavage site in the N-terminal region, however the propeptide is probably subject to only one processing event, at the N-terminal end of the mature peptide.

Its subcellular location is the secreted. The protein resides in the cytoplasm. Functionally, signaling molecule involved in the regulation of expression of DegU-controlled genes. Secreted during production, but the mature peptide acts intracellularly, indicating that it needs to be imported into the cell to function. Stimulates the DegU-dependent expression of aprE, an extracellular alkaline protease. Acts by inhibiting RapG activity. At high concentrations, represses the DegS-dependent aprE expression. This is RapG inhibitor (phrG) from Bacillus subtilis (strain 168).